Reading from the N-terminus, the 432-residue chain is Homogentisate 1,2-dioxygenase (432 aa).

Residue His-286 is the Proton acceptor of the active site. Fe cation-binding residues include His-329 and Glu-335. Homogentisate contacts are provided by Tyr-344 and His-365. His-365 contacts Fe cation.

Belongs to the homogentisate dioxygenase family. As to quaternary structure, hexamer; dimer of trimers. Fe cation is required as a cofactor.

It carries out the reaction homogentisate + O2 = 4-maleylacetoacetate + H(+). It participates in amino-acid degradation; L-phenylalanine degradation; acetoacetate and fumarate from L-phenylalanine: step 4/6. Involved in the catabolism of homogentisate (2,5-dihydroxyphenylacetate or 2,5-OH-PhAc), a central intermediate in the degradation of phenylalanine and tyrosine. Catalyzes the oxidative ring cleavage of the aromatic ring of homogentisate to yield maleylacetoacetate. The polypeptide is Homogentisate 1,2-dioxygenase (Bordetella petrii (strain ATCC BAA-461 / DSM 12804 / CCUG 43448)).